The primary structure comprises 632 residues: Biosynthetic arginine decarboxylase (632 aa).

Position 101 is an N6-(pyridoxal phosphate)lysine (K101). Position 281-291 (281-291 (FDVGGGLGVDY)) interacts with substrate.

This sequence belongs to the Orn/Lys/Arg decarboxylase class-II family. SpeA subfamily. Mg(2+) serves as cofactor. Pyridoxal 5'-phosphate is required as a cofactor.

It carries out the reaction L-arginine + H(+) = agmatine + CO2. The protein operates within amine and polyamine biosynthesis; agmatine biosynthesis; agmatine from L-arginine: step 1/1. In terms of biological role, catalyzes the biosynthesis of agmatine from arginine. This Escherichia coli O157:H7 (strain EC4115 / EHEC) protein is Biosynthetic arginine decarboxylase.